The chain runs to 505 residues: ATP synthase subunit alpha (505 aa).

169-176 contacts ATP; that stretch reads GDRQTGKT.

The protein belongs to the ATPase alpha/beta chains family. F-type ATPases have 2 components, CF(1) - the catalytic core - and CF(0) - the membrane proton channel. CF(1) has five subunits: alpha(3), beta(3), gamma(1), delta(1), epsilon(1). CF(0) has three main subunits: a(1), b(2) and c(9-12). The alpha and beta chains form an alternating ring which encloses part of the gamma chain. CF(1) is attached to CF(0) by a central stalk formed by the gamma and epsilon chains, while a peripheral stalk is formed by the delta and b chains.

Its subcellular location is the cell membrane. It carries out the reaction ATP + H2O + 4 H(+)(in) = ADP + phosphate + 5 H(+)(out). Functionally, produces ATP from ADP in the presence of a proton gradient across the membrane. The alpha chain is a regulatory subunit. The chain is ATP synthase subunit alpha from Clostridium acetobutylicum (strain ATCC 824 / DSM 792 / JCM 1419 / IAM 19013 / LMG 5710 / NBRC 13948 / NRRL B-527 / VKM B-1787 / 2291 / W).